A 459-amino-acid polypeptide reads, in one-letter code: Zeatin O-glucosyltransferase (459 aa).

The active-site Proton acceptor is the H26. Residue H26 coordinates an anthocyanidin. Residue D125 is the Charge relay of the active site. UDP-alpha-D-glucose contacts are provided by S148, A335, Q337, H352, W355, N356, S357, E360, D376, and Q377.

Belongs to the UDP-glycosyltransferase family.

It catalyses the reaction trans-zeatin + UDP-alpha-D-glucose = O-beta-D-glucosyl-trans-zeatin + UDP + H(+). In terms of biological role, may regulate active versus storage forms of cytokinins, and could have an impact on seed growth. Can also use UDP-xylose to catalyze the formation of O-xylosylzeatin but at much lower affinity. In Phaseolus lunatus (Lima bean), this protein is Zeatin O-glucosyltransferase.